The chain runs to 264 residues: Probable DNA polymerase sliding clamp 2 (264 aa).

Residues 75-94 (SIAQEATVGIKISNFVRILD) mediate DNA binding.

This sequence belongs to the PCNA family.

Sliding clamp subunit. Responsible for tethering the catalytic subunit of DNA polymerase to DNA during high-speed replication. This is Probable DNA polymerase sliding clamp 2 from Paramecium bursaria Chlorella virus 1 (PBCV-1).